Reading from the N-terminus, the 110-residue chain is uncharacterized protein (110 aa).

The next 3 helical transmembrane spans lie at 32–52, 57–77, and 90–110; these read VLNV…ALVP, YTHM…CICI, and FLAS…TFVI.

The protein resides in the membrane. In terms of biological role, may play a role in proper chromosome segregation. Suppresses the high-frequency loss of mini-chromosomes when overexpressed, and this suppression is completely dependent on silencing protein SIR4. This is an uncharacterized protein from Saccharomyces cerevisiae (strain ATCC 204508 / S288c) (Baker's yeast).